A 403-amino-acid chain; its full sequence is Aminomethyltransferase, mitochondrial (403 aa).

Residues 1 to 25 (MISQNIIKIIQKSNKRYFSSSNELK) constitute a mitochondrion transit peptide. Glu-225, Arg-260, and Tyr-400 together coordinate substrate.

It belongs to the GcvT family. In terms of assembly, the glycine cleavage system is composed of four proteins: P, T, L and H.

It localises to the mitochondrion. The catalysed reaction is N(6)-[(R)-S(8)-aminomethyldihydrolipoyl]-L-lysyl-[protein] + (6S)-5,6,7,8-tetrahydrofolate = N(6)-[(R)-dihydrolipoyl]-L-lysyl-[protein] + (6R)-5,10-methylene-5,6,7,8-tetrahydrofolate + NH4(+). The glycine cleavage system catalyzes the degradation of glycine. In Dictyostelium discoideum (Social amoeba), this protein is Aminomethyltransferase, mitochondrial (gcvT).